The primary structure comprises 262 residues: Short-chain reductase protein NovJ (262 aa).

Residues 23 to 26 and 73 to 74 each bind NADP(+); these read GAGR and DV. Residue S152 participates in substrate binding. Catalysis depends on Y164, which acts as the Proton acceptor. NADP(+) is bound at residue 164-168; sequence YATAK.

Belongs to the short-chain dehydrogenases/reductases (SDR) family. As to quaternary structure, heterotetramer; the NovJ(2)K(2) heterotetramer is composed of subunits of 2 NovJ and 2 subunits of NovK.

Its pathway is antibiotic biosynthesis; novobiocin biosynthesis. Its function is as follows. Catalytic subunit of the NovJ(2)K(2) heterotetramer that catalyzes the NADPH-dependent reduction of the tyrosyl moiety of L-beta-OH-Tyr-S-NovH intermediate to yield the tethered beta-ketotyrosyl-S-NovH in the novobiocin biosynthesis pathway. Novobiocin is an aminocoumarin family antibiotic that targets bacterial DNA gyrases. In Streptomyces niveus (Streptomyces spheroides), this protein is Short-chain reductase protein NovJ (novJ).